A 285-amino-acid chain; its full sequence is Tryptophan synthase alpha chain (285 aa).

Active-site proton acceptor residues include glutamate 53 and aspartate 64.

This sequence belongs to the TrpA family. As to quaternary structure, tetramer of two alpha and two beta chains.

The enzyme catalyses (1S,2R)-1-C-(indol-3-yl)glycerol 3-phosphate + L-serine = D-glyceraldehyde 3-phosphate + L-tryptophan + H2O. It functions in the pathway amino-acid biosynthesis; L-tryptophan biosynthesis; L-tryptophan from chorismate: step 5/5. Its function is as follows. The alpha subunit is responsible for the aldol cleavage of indoleglycerol phosphate to indole and glyceraldehyde 3-phosphate. This chain is Tryptophan synthase alpha chain, found in Bordetella parapertussis (strain 12822 / ATCC BAA-587 / NCTC 13253).